The primary structure comprises 457 residues: Multidrug resistance protein MdtK (457 aa).

A run of 12 helical transmembrane segments spans residues 11 to 31, 53 to 73, 93 to 113, 127 to 147, 160 to 180, 188 to 208, 243 to 263, 276 to 296, 314 to 334, 357 to 377, 387 to 407, and 418 to 438; these read LLAL…MGFV, IWLP…PVIA, WLAS…GYII, AVGY…FQVA, GMVM…IFIY, LGGI…FIAM, LPIA…ALLV, IALN…AAVT, AART…IFTV, LMLL…GSGI, IFFI…YILA, and PAGF…LMML.

Belongs to the multi antimicrobial extrusion (MATE) (TC 2.A.66.1) family. MdtK subfamily.

It localises to the cell inner membrane. Functionally, multidrug efflux pump that functions probably as a Na(+)/drug antiporter. The protein is Multidrug resistance protein MdtK of Salmonella arizonae (strain ATCC BAA-731 / CDC346-86 / RSK2980).